The chain runs to 273 residues: 2-dehydro-3-deoxyphosphooctonate aldolase (273 aa).

The protein belongs to the KdsA family.

It localises to the cytoplasm. The enzyme catalyses D-arabinose 5-phosphate + phosphoenolpyruvate + H2O = 3-deoxy-alpha-D-manno-2-octulosonate-8-phosphate + phosphate. It participates in carbohydrate biosynthesis; 3-deoxy-D-manno-octulosonate biosynthesis; 3-deoxy-D-manno-octulosonate from D-ribulose 5-phosphate: step 2/3. Its pathway is bacterial outer membrane biogenesis; lipopolysaccharide biosynthesis. The sequence is that of 2-dehydro-3-deoxyphosphooctonate aldolase from Nitratidesulfovibrio vulgaris (strain ATCC 29579 / DSM 644 / CCUG 34227 / NCIMB 8303 / VKM B-1760 / Hildenborough) (Desulfovibrio vulgaris).